The chain runs to 744 residues: Elongation factor G, mitochondrial (744 aa).

The N-terminal 25 residues, M1–F25, are a transit peptide targeting the mitochondrion. The tr-type G domain occupies E38–G315. GTP is bound by residues A47–T54, D114–H118, and N168–D171.

This sequence belongs to the TRAFAC class translation factor GTPase superfamily. Classic translation factor GTPase family. EF-G/EF-2 subfamily.

The protein resides in the mitochondrion. It functions in the pathway protein biosynthesis; polypeptide chain elongation. Its function is as follows. Mitochondrial GTPase that catalyzes the GTP-dependent ribosomal translocation step during translation elongation. During this step, the ribosome changes from the pre-translocational (PRE) to the post-translocational (POST) state as the newly formed A-site-bound peptidyl-tRNA and P-site-bound deacylated tRNA move to the P and E sites, respectively. Catalyzes the coordinated movement of the two tRNA molecules, the mRNA and conformational changes in the ribosome. The chain is Elongation factor G, mitochondrial from Culex quinquefasciatus (Southern house mosquito).